Reading from the N-terminus, the 40-residue chain is Photosystem II reaction center protein J (40 aa).

The chain crosses the membrane as a helical span at residues I8–F28.

It belongs to the PsbJ family. PSII is composed of 1 copy each of membrane proteins PsbA, PsbB, PsbC, PsbD, PsbE, PsbF, PsbH, PsbI, PsbJ, PsbK, PsbL, PsbM, PsbT, PsbX, PsbY, PsbZ, Psb30/Ycf12, at least 3 peripheral proteins of the oxygen-evolving complex and a large number of cofactors. It forms dimeric complexes.

The protein resides in the plastid. The protein localises to the chloroplast thylakoid membrane. Functionally, one of the components of the core complex of photosystem II (PSII). PSII is a light-driven water:plastoquinone oxidoreductase that uses light energy to abstract electrons from H(2)O, generating O(2) and a proton gradient subsequently used for ATP formation. It consists of a core antenna complex that captures photons, and an electron transfer chain that converts photonic excitation into a charge separation. This is Photosystem II reaction center protein J from Lolium perenne (Perennial ryegrass).